A 155-amino-acid polypeptide reads, in one-letter code: Ribosomal RNA large subunit methyltransferase H (155 aa).

S-adenosyl-L-methionine contacts are provided by residues L73, G104, and 123 to 128; that span reads LSPLTL.

It belongs to the RNA methyltransferase RlmH family. In terms of assembly, homodimer.

It is found in the cytoplasm. It carries out the reaction pseudouridine(1915) in 23S rRNA + S-adenosyl-L-methionine = N(3)-methylpseudouridine(1915) in 23S rRNA + S-adenosyl-L-homocysteine + H(+). Its function is as follows. Specifically methylates the pseudouridine at position 1915 (m3Psi1915) in 23S rRNA. The protein is Ribosomal RNA large subunit methyltransferase H of Pseudomonas putida (strain W619).